The primary structure comprises 403 residues: Enoyl-[acyl-carrier-protein] reductase [NADH] (403 aa).

NAD(+) is bound by residues Gly49 to Tyr54, Phe75 to Glu76, Asp112 to Ala113, and Leu141 to Ala142. Residue Tyr227 coordinates substrate. Tyr237 acts as the Proton donor in catalysis. NAD(+) contacts are provided by residues Lys246 and Val276 to Thr278.

This sequence belongs to the TER reductase family. As to quaternary structure, monomer.

It carries out the reaction a 2,3-saturated acyl-[ACP] + NAD(+) = a (2E)-enoyl-[ACP] + NADH + H(+). It functions in the pathway lipid metabolism; fatty acid biosynthesis. Its function is as follows. Involved in the final reduction of the elongation cycle of fatty acid synthesis (FAS II). Catalyzes the reduction of a carbon-carbon double bond in an enoyl moiety that is covalently linked to an acyl carrier protein (ACP). This Pseudomonas putida (strain GB-1) protein is Enoyl-[acyl-carrier-protein] reductase [NADH].